The following is a 384-amino-acid chain: Dihydrolipoyllysine-residue acetyltransferase component of pyruvate dehydrogenase complex (384 aa).

Residues 2–77 enclose the Lipoyl-binding domain; it reads ANEFKFTDVG…SIGQVMAVIG (76 aa). Lys43 is subject to N6-lipoyllysine. His356 is an active-site residue.

The protein belongs to the 2-oxoacid dehydrogenase family. As to quaternary structure, forms a 24-polypeptide structural core with octahedral symmetry. (R)-lipoate is required as a cofactor.

The enzyme catalyses N(6)-[(R)-dihydrolipoyl]-L-lysyl-[protein] + acetyl-CoA = N(6)-[(R)-S(8)-acetyldihydrolipoyl]-L-lysyl-[protein] + CoA. Its function is as follows. The pyruvate dehydrogenase complex catalyzes the overall conversion of pyruvate to acetyl-CoA and CO(2). It contains multiple copies of three enzymatic components: pyruvate dehydrogenase (E1), dihydrolipoamide acetyltransferase (E2) and lipoamide dehydrogenase (E3). The polypeptide is Dihydrolipoyllysine-residue acetyltransferase component of pyruvate dehydrogenase complex (pdhC) (Mycoplasma genitalium (strain ATCC 33530 / DSM 19775 / NCTC 10195 / G37) (Mycoplasmoides genitalium)).